Reading from the N-terminus, the 204-residue chain is Glycerol-3-phosphate acyltransferase (204 aa).

5 helical membrane-spanning segments follow: residues 8–28, 53–73, 81–101, 116–136, and 155–175; these read ILIF…CYIF, VPAA…VVIA, FITA…IFFG, FGFS…VAII, and VIFT…IIIL.

This sequence belongs to the PlsY family. In terms of assembly, probably interacts with PlsX.

It is found in the cell inner membrane. It catalyses the reaction an acyl phosphate + sn-glycerol 3-phosphate = a 1-acyl-sn-glycero-3-phosphate + phosphate. Its pathway is lipid metabolism; phospholipid metabolism. In terms of biological role, catalyzes the transfer of an acyl group from acyl-phosphate (acyl-PO(4)) to glycerol-3-phosphate (G3P) to form lysophosphatidic acid (LPA). This enzyme utilizes acyl-phosphate as fatty acyl donor, but not acyl-CoA or acyl-ACP. This chain is Glycerol-3-phosphate acyltransferase, found in Francisella tularensis subsp. novicida (strain U112).